We begin with the raw amino-acid sequence, 346 residues long: N-acetyl-gamma-glutamyl-phosphate reductase (346 aa).

The active site involves Cys150.

The protein belongs to the NAGSA dehydrogenase family. Type 1 subfamily.

The protein resides in the cytoplasm. It catalyses the reaction N-acetyl-L-glutamate 5-semialdehyde + phosphate + NADP(+) = N-acetyl-L-glutamyl 5-phosphate + NADPH + H(+). The protein operates within amino-acid biosynthesis; L-arginine biosynthesis; N(2)-acetyl-L-ornithine from L-glutamate: step 3/4. Its function is as follows. Catalyzes the NADPH-dependent reduction of N-acetyl-5-glutamyl phosphate to yield N-acetyl-L-glutamate 5-semialdehyde. In Lachnoclostridium phytofermentans (strain ATCC 700394 / DSM 18823 / ISDg) (Clostridium phytofermentans), this protein is N-acetyl-gamma-glutamyl-phosphate reductase.